We begin with the raw amino-acid sequence, 98 residues long: NADH-ubiquinone oxidoreductase chain 4L (98 aa).

3 helical membrane passes run 1 to 21, 29 to 49, and 61 to 81; these read MSLTYMNMFMAFTISLLGLLM, SLLCLEGMMLSLFVMMTMTIL, and IILLVFAACEAALGLSLLVMV.

The protein belongs to the complex I subunit 4L family. In terms of assembly, core subunit of respiratory chain NADH dehydrogenase (Complex I) which is composed of 45 different subunits.

The protein localises to the mitochondrion inner membrane. It carries out the reaction a ubiquinone + NADH + 5 H(+)(in) = a ubiquinol + NAD(+) + 4 H(+)(out). Its function is as follows. Core subunit of the mitochondrial membrane respiratory chain NADH dehydrogenase (Complex I) which catalyzes electron transfer from NADH through the respiratory chain, using ubiquinone as an electron acceptor. Part of the enzyme membrane arm which is embedded in the lipid bilayer and involved in proton translocation. The chain is NADH-ubiquinone oxidoreductase chain 4L (MT-ND4L) from Vampyressa brocki (Brock's yellow-eared bat).